Reading from the N-terminus, the 445-residue chain is MKPVIALVGRPNVGKSTLFNRLTRSRDALVADLPGLTRDRHYGEGRVGARPYLVVDTGGFEPVAKDGILHEMARQTRQAVEEADVVVFIVDGRNGLAPQDKSIADYLRKTGRPIFLVVNKAEGMKYTAVATDFYELGLGDPRAISAAHGDGVTDMINEALEVAYADQPEEEDDNDPSRGIKIAIVGRPNVGKSTLVNALIGEDRVIAFDMPGTTRDSIYVDFERNGKKYTLIDTAGLRRSGKVFEAIEKFSVVKTLQSISDANVVILLLDAQQDISDQDAHIAGFVVEQGRALVIGVNKWDGLDEHARERAKADLTRKLKFLDFAKSHFISAAKKTGIGALMRSVDDAYAAAMAKLPTPKLTRALIEAVEFQQPRRRGPVRPKLRYAHQGGQNPPIIVIHGNALDAVTETYKRYLENRFRETFSLTGTPLRIEFRSSTNPYADKG.

EngA-type G domains follow at residues 3-167 (PVIA…YADQ) and 180-353 (IKIA…AAAM). Residues 9–16 (GRPNVGKS), 56–60 (DTGGF), 119–122 (NKAE), 186–193 (GRPNVGKS), 233–237 (DTAGL), and 298–301 (NKWD) contribute to the GTP site. The KH-like domain occupies 354–438 (AKLPTPKLTR…PLRIEFRSST (85 aa)).

Belongs to the TRAFAC class TrmE-Era-EngA-EngB-Septin-like GTPase superfamily. EngA (Der) GTPase family. In terms of assembly, associates with the 50S ribosomal subunit.

Functionally, GTPase that plays an essential role in the late steps of ribosome biogenesis. This chain is GTPase Der, found in Burkholderia multivorans (strain ATCC 17616 / 249).